Reading from the N-terminus, the 285-residue chain is Bifunctional protein FolD (285 aa).

NADP(+)-binding positions include G164 to S166, S193, and I234.

This sequence belongs to the tetrahydrofolate dehydrogenase/cyclohydrolase family. Homodimer.

The catalysed reaction is (6R)-5,10-methylene-5,6,7,8-tetrahydrofolate + NADP(+) = (6R)-5,10-methenyltetrahydrofolate + NADPH. It catalyses the reaction (6R)-5,10-methenyltetrahydrofolate + H2O = (6R)-10-formyltetrahydrofolate + H(+). It participates in one-carbon metabolism; tetrahydrofolate interconversion. Catalyzes the oxidation of 5,10-methylenetetrahydrofolate to 5,10-methenyltetrahydrofolate and then the hydrolysis of 5,10-methenyltetrahydrofolate to 10-formyltetrahydrofolate. The polypeptide is Bifunctional protein FolD (Desulfovibrio desulfuricans (strain ATCC 27774 / DSM 6949 / MB)).